Reading from the N-terminus, the 239-residue chain is Large ribosomal subunit protein uL1 (239 aa).

It belongs to the universal ribosomal protein uL1 family. As to quaternary structure, part of the 50S ribosomal subunit.

Functionally, binds directly to 23S rRNA. The L1 stalk is quite mobile in the ribosome, and is involved in E site tRNA release. Protein L1 is also a translational repressor protein, it controls the translation of the L11 operon by binding to its mRNA. This is Large ribosomal subunit protein uL1 from Rickettsia conorii (strain ATCC VR-613 / Malish 7).